Here is a 757-residue protein sequence, read N- to C-terminus: Dolichyl-diphosphooligosaccharide--protein glycosyltransferase subunit stt-3 (757 aa).

The Cytoplasmic segment spans residues 1–13; it reads MTSTTAARTASSR. A helical membrane pass occupies residues 14-34; sequence VGATTLLTIVVLALAWFVGFA. Topologically, residues 35–121 are lumenal; the sequence is SRLFAIVRFE…VHIREVCVFL (87 aa). The DXD motif 1 motif lies at 49–51; sequence EFD. Mn(2+) is bound at residue D51. Residues 122-140 traverse the membrane as a helical segment; it reads APTFSGLTAIATYLLTKEL. Topologically, residues 141–142 are cytoplasmic; the sequence is WS. Residues 143–160 traverse the membrane as a helical segment; the sequence is PGAGLFAACFIAISPGYT. Topologically, residues 161-171 are lumenal; it reads SRSVAGSYDNE. Positions 169 and 171 each coordinate Mn(2+). The short motif at 169–171 is the DXD motif 2 element; it reads DNE. The chain crosses the membrane as a helical span at residues 172–191; that stretch reads GIAIFALQFTYYLWVKSLKT. At 192-193 the chain is on the cytoplasmic side; the sequence is GS. A helical transmembrane segment spans residues 194 to 208; sequence IMWASLCALSYFYMV. Topologically, residues 209 to 210 are lumenal; that stretch reads SA. 2 consecutive transmembrane segments (helical) span residues 211-235 and 236-261; these read WGGY…GRYS and SRLF…FVGF. The Lumenal portion of the chain corresponds to 262 to 269; the sequence is QPVRTSEH. The chain crosses the membrane as a helical span at residues 270–289; sequence MPAFGVFGLLQIVALMHYAR. Over 290 to 299 the chain is Cytoplasmic; the sequence is NRITRQQFMT. Residues 300-320 traverse the membrane as a helical segment; that stretch reads LFVGGLTILGALSVVVYFALV. The Lumenal segment spans residues 321-358; sequence WGGYVAPFSGRFYSLWDTGYAKIHIPIIASVSEHQPTT. The SVSE motif signature appears at 350–353; the sequence is SVSE. Residues 359 to 381 form a helical membrane-spanning segment; it reads WVSFFFDLHITAAVFPVGLWYCI. The Cytoplasmic segment spans residues 382-387; sequence KKVNDE. The chain crosses the membrane as a helical span at residues 388–404; the sequence is RVFIILYAVSAVYFAGV. The Lumenal segment spans residues 405–408; it reads MVRL. A dolichyl diphosphooligosaccharide-binding site is contributed by R407. The helical transmembrane segment at 409-430 threads the bilayer; it reads MLTLTPAVCVLAGIGFSYTFEK. The Cytoplasmic portion of the chain corresponds to 431-469; the sequence is YLKDEETKERSSSQSGTTKDEKLYDKAAKNVKSRNANDG. The chain crosses the membrane as a helical span at residues 470-495; it reads DESGVSSNVRTIISIILVIFLLMFVV. Over 496–757 the chain is Lumenal; that stretch reads HATYVTSNAY…IRPAPTASKA (262 aa). The interacts with target acceptor peptide in protein substrate stretch occupies residues 547–549; that stretch reads WWD. The WWDYG motif motif lies at 547 to 551; sequence WWDYG. Y552 serves as a coordination point for dolichyl diphosphooligosaccharide. N-linked (GlcNAc...) asparagine glycans are attached at residues N559 and N566. Residue N570 is glycosylated (N-linked (GlcNAc...) (high mannose) asparagine). The N-linked (GlcNAc...) asparagine glycan is linked to N584. The short motif at 614-621 is the DK motif element; it reads DINKFLWM. Residues 721–757 are disordered; it reads RPTVKSEEATIPIKGKKATQGKNKKGVIRPAPTASKA. A compositionally biased stretch (basic residues) spans 734-747; sequence KGKKATQGKNKKGV.

The protein belongs to the STT3 family. Component of the oligosaccharyltransferase (OST) complex. Mg(2+) serves as cofactor. The cofactor is Mn(2+).

It localises to the endoplasmic reticulum membrane. The enzyme catalyses a di-trans,poly-cis-dolichyl diphosphooligosaccharide + L-asparaginyl-[protein] = N(4)-(oligosaccharide-(1-&gt;4)-N-acetyl-beta-D-glucosaminyl-(1-&gt;4)-N-acetyl-beta-D-glucosaminyl)-L-asparaginyl-[protein] + a di-trans,poly-cis-dolichyl diphosphate + H(+). Its pathway is protein modification; protein glycosylation. Its function is as follows. Catalytic subunit of the oligosaccharyl transferase (OST) complex that catalyzes the initial transfer of a defined glycan (Glc(3)Man(9)GlcNAc(2) in eukaryotes) from the lipid carrier dolichol-pyrophosphate to an asparagine residue within an Asn-X-Ser/Thr consensus motif in nascent polypeptide chains, the first step in protein N-glycosylation. N-glycosylation occurs cotranslationally and the complex associates with the Sec61 complex at the channel-forming translocon complex that mediates protein translocation across the endoplasmic reticulum (ER). All subunits are required for a maximal enzyme activity. This subunit contains the active site and the acceptor peptide and donor lipid-linked oligosaccharide (LLO) binding pockets. The polypeptide is Dolichyl-diphosphooligosaccharide--protein glycosyltransferase subunit stt-3 (Caenorhabditis elegans).